The primary structure comprises 369 residues: Phospho-N-acetylmuramoyl-pentapeptide-transferase (369 aa).

10 helical membrane passes run 2-22 (IAIL…TPFF), 54-74 (GLVI…FLGL), 80-100 (GLLV…DDIL), 113-133 (FYKV…TFLV), 158-178 (ALFS…LLWI), 195-215 (LDGL…VIGF), 241-261 (PLDM…FLWW), 268-288 (IMMG…LSIL), 293-313 (LLFL…ILQI), and 347-367 (FWII…ADWL).

Belongs to the glycosyltransferase 4 family. MraY subfamily. Requires Mg(2+) as cofactor.

It is found in the cell membrane. It catalyses the reaction UDP-N-acetyl-alpha-D-muramoyl-L-alanyl-gamma-D-glutamyl-meso-2,6-diaminopimeloyl-D-alanyl-D-alanine + di-trans,octa-cis-undecaprenyl phosphate = di-trans,octa-cis-undecaprenyl diphospho-N-acetyl-alpha-D-muramoyl-L-alanyl-D-glutamyl-meso-2,6-diaminopimeloyl-D-alanyl-D-alanine + UMP. It functions in the pathway cell wall biogenesis; peptidoglycan biosynthesis. Functionally, catalyzes the initial step of the lipid cycle reactions in the biosynthesis of the cell wall peptidoglycan: transfers peptidoglycan precursor phospho-MurNAc-pentapeptide from UDP-MurNAc-pentapeptide onto the lipid carrier undecaprenyl phosphate, yielding undecaprenyl-pyrophosphoryl-MurNAc-pentapeptide, known as lipid I. In Tropheryma whipplei (strain Twist) (Whipple's bacillus), this protein is Phospho-N-acetylmuramoyl-pentapeptide-transferase.